A 107-amino-acid chain; its full sequence is Nucleoid-associated protein GOX0603 (107 aa).

It belongs to the YbaB/EbfC family. In terms of assembly, homodimer.

The protein resides in the cytoplasm. The protein localises to the nucleoid. Its function is as follows. Binds to DNA and alters its conformation. May be involved in regulation of gene expression, nucleoid organization and DNA protection. In Gluconobacter oxydans (strain 621H) (Gluconobacter suboxydans), this protein is Nucleoid-associated protein GOX0603.